We begin with the raw amino-acid sequence, 196 residues long: UPF0200 protein MK0400 (196 aa).

Residue 7-14 (GMPGAGKG) participates in ATP binding.

It belongs to the UPF0200 family.

This is UPF0200 protein MK0400 from Methanopyrus kandleri (strain AV19 / DSM 6324 / JCM 9639 / NBRC 100938).